We begin with the raw amino-acid sequence, 443 residues long: Acid phosphatase type 7 (443 aa).

The first 23 residues, 1–23 (MAAAPPPPPPLLLLLLCVCAVFA), serve as a signal peptide directing secretion. N-linked (GlcNAc...) asparagine glycosylation is found at Asn-53, Asn-76, and Asn-126. Fe cation-binding residues include Asp-140, Asp-169, and Tyr-172. Residue Asp-169 coordinates Zn(2+). Zn(2+) is bound at residue Asn-204. N-linked (GlcNAc...) asparagine glycosylation occurs at Asn-210. His-288 is a binding site for Zn(2+). Asn-313 carries N-linked (GlcNAc...) asparagine glycosylation. His-338 lines the Zn(2+) pocket. A Fe cation-binding site is contributed by His-340. 2 N-linked (GlcNAc...) asparagine glycosylation sites follow: Asn-355 and Asn-409.

Belongs to the metallophosphoesterase superfamily. Purple acid phosphatase family. Fe cation is required as a cofactor. Requires Zn(2+) as cofactor.

It localises to the secreted. It catalyses the reaction a phosphate monoester + H2O = an alcohol + phosphate. The chain is Acid phosphatase type 7 from Danio rerio (Zebrafish).